The primary structure comprises 121 residues: uncharacterized protein (121 aa).

Its subcellular location is the mitochondrion. This is an uncharacterized protein from Arabidopsis thaliana (Mouse-ear cress).